A 98-amino-acid polypeptide reads, in one-letter code: MSRACELTGKTVQYGNNVSHANNKTRRRFLPNLCNVTLISEVMQQSYRLRISANAVRSVEHRGGLDNFLTKADDKELSQRARLLKRQIVKKKAEQAAA.

This sequence belongs to the bacterial ribosomal protein bL28 family.

In Bartonella bacilliformis (strain ATCC 35685 / KC583 / Herrer 020/F12,63), this protein is Large ribosomal subunit protein bL28.